The primary structure comprises 269 residues: MKRSIKHIYLLSDATGETVERVVRAALSQFRDVEARFHRVTRIRSREDVIWALEEVLREPGMVVYTLVDTELAQLLRDEAEAHGLDAIDLISPLLFKLSDFFGEAPQKEPGLLHQINSEYHKRVDAVDFTVKHDDGQDPRGLAKADFILVGVSRSSKTPLSMYLAHKGYKVANVPIVKGIDPPPELYKVDQKRVVGLIIDAERLVQIRTARLRNLGQMPKGSYADYERIEEELEFCRRLYRRNPQWLVIDVTKKSVEESAAEIIQKLAG.

Position 151-158 (glycine 151–threonine 158) interacts with ADP.

This sequence belongs to the pyruvate, phosphate/water dikinase regulatory protein family. PDRP subfamily.

The catalysed reaction is N(tele)-phospho-L-histidyl/L-threonyl-[pyruvate, phosphate dikinase] + ADP = N(tele)-phospho-L-histidyl/O-phospho-L-threonyl-[pyruvate, phosphate dikinase] + AMP + H(+). The enzyme catalyses N(tele)-phospho-L-histidyl/O-phospho-L-threonyl-[pyruvate, phosphate dikinase] + phosphate + H(+) = N(tele)-phospho-L-histidyl/L-threonyl-[pyruvate, phosphate dikinase] + diphosphate. Functionally, bifunctional serine/threonine kinase and phosphorylase involved in the regulation of the pyruvate, phosphate dikinase (PPDK) by catalyzing its phosphorylation/dephosphorylation. This is Putative pyruvate, phosphate dikinase regulatory protein from Geobacter sulfurreducens (strain ATCC 51573 / DSM 12127 / PCA).